A 157-amino-acid chain; its full sequence is Dihydrofolate reductase type 1 (157 aa).

The 155-residue stretch at 2–156 folds into the DHFR domain; it reads KLSLMVAISK…INYSYQIWQK (155 aa).

It belongs to the dihydrofolate reductase family. In terms of assembly, homodimer.

The catalysed reaction is (6S)-5,6,7,8-tetrahydrofolate + NADP(+) = 7,8-dihydrofolate + NADPH + H(+). It participates in cofactor biosynthesis; tetrahydrofolate biosynthesis; 5,6,7,8-tetrahydrofolate from 7,8-dihydrofolate: step 1/1. Functionally, key enzyme in folate metabolism. Catalyzes an essential reaction for de novo glycine and purine synthesis, and for DNA precursor synthesis. This chain is Dihydrofolate reductase type 1 (dhfrI), found in Escherichia coli.